Consider the following 151-residue polypeptide: UPF0098 protein MTH_273 (151 aa).

It belongs to the UPF0098 family.

This chain is UPF0098 protein MTH_273, found in Methanothermobacter thermautotrophicus (strain ATCC 29096 / DSM 1053 / JCM 10044 / NBRC 100330 / Delta H) (Methanobacterium thermoautotrophicum).